The primary structure comprises 159 residues: Ribosome maturation factor RimP (159 aa).

It belongs to the RimP family.

It localises to the cytoplasm. Required for maturation of 30S ribosomal subunits. This is Ribosome maturation factor RimP from Lacticaseibacillus casei (strain BL23) (Lactobacillus casei).